The chain runs to 377 residues: UPF0754 membrane protein lwe2241 (377 aa).

2 helical membrane passes run 1-21 (MSVL…GAMT) and 357-377 (YLGG…AIWI).

The protein belongs to the UPF0754 family.

The protein resides in the cell membrane. This is UPF0754 membrane protein lwe2241 from Listeria welshimeri serovar 6b (strain ATCC 35897 / DSM 20650 / CCUG 15529 / CIP 8149 / NCTC 11857 / SLCC 5334 / V8).